Consider the following 1368-residue polypeptide: DNA-directed RNA polymerase subunit beta (1368 aa).

Belongs to the RNA polymerase beta chain family. The RNAP catalytic core consists of 2 alpha, 1 beta, 1 beta' and 1 omega subunit. When a sigma factor is associated with the core the holoenzyme is formed, which can initiate transcription.

The catalysed reaction is RNA(n) + a ribonucleoside 5'-triphosphate = RNA(n+1) + diphosphate. In terms of biological role, DNA-dependent RNA polymerase catalyzes the transcription of DNA into RNA using the four ribonucleoside triphosphates as substrates. The chain is DNA-directed RNA polymerase subunit beta from Cupriavidus pinatubonensis (strain JMP 134 / LMG 1197) (Cupriavidus necator (strain JMP 134)).